The chain runs to 265 residues: Transmembrane protein 270 (265 aa).

3 helical membrane-spanning segments follow: residues 72 to 92 (PLGQALWAGLALIQVPVWLVL), 130 to 150 (LFLSCLHGLMLVALLLVVVTW), and 185 to 205 (LYWWVETMTALTSWHLAYLIT). Residues 229-265 (QEVEPQEVSGSSLLPSLSASSDSESGTVLPEQETPRE) form a disordered region. Positions 237–253 (SGSSLLPSLSASSDSES) are enriched in low complexity.

It is found in the membrane. This Homo sapiens (Human) protein is Transmembrane protein 270.